Consider the following 202-residue polypeptide: Small ribosomal subunit protein uS4 (202 aa).

The tract at residues 21 to 42 (LSRKSPRRAYPPGQHGQARRKR) is disordered. The 63-residue stretch at 90–152 (MRLDNTVFRL…DRSRKLVETN (63 aa)) folds into the S4 RNA-binding domain.

This sequence belongs to the universal ribosomal protein uS4 family. Part of the 30S ribosomal subunit. Contacts protein S5. The interaction surface between S4 and S5 is involved in control of translational fidelity.

Its function is as follows. One of the primary rRNA binding proteins, it binds directly to 16S rRNA where it nucleates assembly of the body of the 30S subunit. Functionally, with S5 and S12 plays an important role in translational accuracy. The chain is Small ribosomal subunit protein uS4 from Synechocystis sp. (strain ATCC 27184 / PCC 6803 / Kazusa).